Consider the following 737-residue polypeptide: Serine/threonine-protein kinase dst1 (737 aa).

The region spanning 29 to 281 is the Protein kinase domain; it reads YHIQERLGKG…AKELLNHEFI (253 aa). Residues 35–43 and Lys-58 each bind ATP; that span reads LGKGSFGQV. The Proton acceptor role is filled by Asp-149. Disordered regions lie at residues 305-356, 372-475, 491-559, and 575-631; these read SMFE…SNNY, KDDA…TTDQ, KPIT…ISNN, and NNNI…ESLS. 4 stretches are compositionally biased toward low complexity: residues 334 to 345, 401 to 410, 425 to 444, and 454 to 473; these read NNNTVTNYSTVI, SSCSSSSSSS, PITN…NKIP, and ATTT…STTT. Polar residues predominate over residues 491 to 503; the sequence is KPITSSNSTSVTP. The span at 510–525 shows a compositional bias: low complexity; sequence SNNTTTTSNINTPIKP. Polar residues-rich tracts occupy residues 529-554 and 585-596; these read LKKS…TPLK and SPTTGQKIIKTN. Low complexity predominate over residues 597-615; it reads SGGVLKSSGGLSSKRSPSS.

This sequence belongs to the protein kinase superfamily. STE Ser/Thr protein kinase family. STE20 subfamily. The cofactor is Mg(2+).

It catalyses the reaction L-seryl-[protein] + ATP = O-phospho-L-seryl-[protein] + ADP + H(+). The catalysed reaction is L-threonyl-[protein] + ATP = O-phospho-L-threonyl-[protein] + ADP + H(+). This is Serine/threonine-protein kinase dst1 from Dictyostelium discoideum (Social amoeba).